The chain runs to 804 residues: MNYNHNQIEKKWQDYWDENKTFKTNDNLGQKKFYALDMFPYPSGAGLHVGHPEGYTATDIISRYKRMQGYNVLHPMGWDAFGLPAEQYALDTGNDPREFTKKNIQTFKRQIKELGFSYDWDREVNTTDPEYYKWTQWIFIQLYNKGLAYVDEVAVNWCPALGTVLSNEEVIDGVSERGGHPVYRKPMKQWVLKITEYADQLLADLDDLDWPESLKDMQRNWIGRSEGAKVSFDVDNTEGKVEVFTTRPDTIYGASFLVLSPEHALVNSITTDEYKEKVKAYQTEASKKSDLERTDLAKDKSGVFTGAYAINPLSGEKVQIWIADYVLSTYGTGAIMAVPAHDDRDYEFAKKFDLPIIEVIEGGNVEEAAYTGEGKHINSGELDGLENEAAITKAIQLLEQKGAGEKKVNYKLRDWLFSRQRYWGEPIPVIHWEDGTMTTVPEEELPLLLPETDEIKPSGTGESPLANIDSFVNVVDEKTGMKGRRETNTMPQWAGSCWYYLRYIDPKNENMLADPEKLKHWLPVDLYIGGVEHAVLHLLYARFWHKVLYDLGIVPTKEPFQKLFNQGMILGEGNEKMSKSKGNVINPDDIVQSHGADTLRLYEMFMGPLDAAIAWSEKGLDGSRRFLDRVWRLMVNEDGTLSSKIVTTNNKSLDKVYNQTVKKVTEDFETLGFNTAISQLMVFINECYKVDEVYKPYIEGFVKMLAPIAPHIGEELWSKLGHEESITYQPWPTYDEALLVDDEVEIVVQVNGKLRAKIKIAKDTSKEEMQEIALSNDNVKASIEGKDIMKVIAVPQKLVNIVAK.

Residues 40 to 51 (PYPSGAGLHVGH) carry the 'HIGH' region motif. The 'KMSKS' region motif lies at 576–580 (KMSKS). Lysine 579 provides a ligand contact to ATP.

It belongs to the class-I aminoacyl-tRNA synthetase family.

It localises to the cytoplasm. It catalyses the reaction tRNA(Leu) + L-leucine + ATP = L-leucyl-tRNA(Leu) + AMP + diphosphate. The sequence is that of Leucine--tRNA ligase from Staphylococcus aureus (strain Mu3 / ATCC 700698).